The chain runs to 406 residues: Succinylornithine transaminase (406 aa).

Lysine 252 carries the post-translational modification N6-(pyridoxal phosphate)lysine.

The protein belongs to the class-III pyridoxal-phosphate-dependent aminotransferase family. AstC subfamily. Requires pyridoxal 5'-phosphate as cofactor.

It catalyses the reaction N(2)-succinyl-L-ornithine + 2-oxoglutarate = N-succinyl-L-glutamate 5-semialdehyde + L-glutamate. It functions in the pathway amino-acid degradation; L-arginine degradation via AST pathway; L-glutamate and succinate from L-arginine: step 3/5. Catalyzes the transamination of N(2)-succinylornithine and alpha-ketoglutarate into N(2)-succinylglutamate semialdehyde and glutamate. Can also act as an acetylornithine aminotransferase. This is Succinylornithine transaminase from Escherichia coli (strain 55989 / EAEC).